Consider the following 355-residue polypeptide: Mu-like prophage FluMu protein gp47 (355 aa).

This sequence belongs to the Mu gp47/PBSX XkdT family.

This is Mu-like prophage FluMu protein gp47 from Haemophilus influenzae (strain ATCC 51907 / DSM 11121 / KW20 / Rd).